The following is a 489-amino-acid chain: Arginine biosynthesis bifunctional protein ArgJ 2, mitochondrial (489 aa).

Residues 1–11 (MLLISRIGARH) constitute a mitochondrion transit peptide. Residues T205, K234, T245, E341, and N484 each contribute to the substrate site. The active-site Nucleophile is the T245.

The protein belongs to the ArgJ family. As to quaternary structure, heterodimer of an alpha and a beta chain. In terms of processing, the alpha and beta chains are autoproteolytically processed from a single precursor protein within the mitochondrion.

It localises to the mitochondrion matrix. It catalyses the reaction N(2)-acetyl-L-ornithine + L-glutamate = N-acetyl-L-glutamate + L-ornithine. The catalysed reaction is L-glutamate + acetyl-CoA = N-acetyl-L-glutamate + CoA + H(+). It functions in the pathway amino-acid biosynthesis; L-arginine biosynthesis; L-ornithine and N-acetyl-L-glutamate from L-glutamate and N(2)-acetyl-L-ornithine (cyclic): step 1/1. It participates in amino-acid biosynthesis; L-arginine biosynthesis; N(2)-acetyl-L-ornithine from L-glutamate: step 1/4. Its function is as follows. Catalyzes two activities which are involved in the cyclic version of arginine biosynthesis: the synthesis of acetylglutamate from glutamate and acetyl-CoA, and of ornithine by transacetylation between acetylornithine and glutamate. This chain is Arginine biosynthesis bifunctional protein ArgJ 2, mitochondrial, found in Sclerotinia sclerotiorum (strain ATCC 18683 / 1980 / Ss-1) (White mold).